Here is a 342-residue protein sequence, read N- to C-terminus: Antihemorrhagic factor HSF (342 aa).

Positions 1 to 19 (MNSLVALVLLGQIIGSTLS) are cleaved as a signal peptide. Cystatin fetuin-A-type domains lie at 22-130 (VRGD…VKCH) and 141-254 (RNCS…SNCV). The Cell attachment site motif lies at 23 to 25 (RGD). Positions 24-108 (GDLECDDKEA…RQQHNHAVEM (85 aa)) are indispensable for metalloproteinase inhibition. Intrachain disulfides connect Cys-28–Cys-332, Cys-85–Cys-96, Cys-110–Cys-129, Cys-143–Cys-146, Cys-205–Cys-217, and Cys-230–Cys-253. Asn-142 is a glycosylation site (N-linked (GlcNAc...) asparagine). The N-linked (GlcNAc...) asparagine glycan is linked to Asn-204. Asn-282 is a glycosylation site (N-linked (GlcNAc...) asparagine).

This sequence belongs to the fetuin family. Post-translationally, cys-63 may exist in a mixed disulfide form with a thiol compound such as glutathione. As to expression, expressed by the liver.

It is found in the secreted. Its function is as follows. Inhibits hemorrhagic and proteolytic activities of metalloproteinases (HR1A, HR1B, HR2a, HR2b and H2 proteinase from T.flavodidis and brevilysins H3, H4, H6 and L4 from A.halys brevicaudus). Has no effect on brevilysins H2. Has no effect on papain and cathepsin-B. This chain is Antihemorrhagic factor HSF, found in Protobothrops flavoviridis (Habu).